Here is a 693-residue protein sequence, read N- to C-terminus: MAAYAQFGYAGYPTANQLTTANTDSQSGHGGGSPLSGTNEASLSPSGGSTATGLTAGPLSPGAVSQSSHHAGHKGLSTSPAEDVVGGDVPVGLSSAAQDLPSRGSCCENGRPIITDPVSGQTVCSCQYDPARLAIGGYSRMALPSGGVGVGVYGGPYPSNEQNPYPSIGVDNSAFYAPLSNPYGIKDTSPSTEMSAWTSASLQSTTGYYSYDPTLAAYGYGPNYDLAARRKNATRESTATLKAWLSEHKKNPYPTKGEKIMLAIITKMTLTQVSTWFANARRRLKKENKMTWEPKNKTEDDDDGMMSDDEKEKDAGDGGKLSTEAFDPGNQLIKSELGKAEKEVDSSGDQKLDLDREPHNLVAMRGLAPYATPPGAHPMHAAYSSYAQSHNTHTHPHPQQMQHHQQQQQQQQNQQQLQHHQMDQPYYHPGGYGQEESGEFAAQKNPLSRDCGIPVPASKPKIWSVADTAACKTPPPTAAYLGQNFYPPSSADQQLPHQPLQQHQQQQLQQLQQQQQHHHHPHHHHPHHSMELGSPLSMMSSYAGGSPYSRIPTAYTEAMGMHLPSSSSSSSSTGKLPPTHIHPAPQRVGFPEIQPDTPPQTPPTMKLNSSGGSSSSSGSSHSSSMHSVTPVTVASMVNILYSNTDSGYGHGHSHGHGHGHGHGLGHGHGLGHGHGHMGVTSNAYLTEGGRSGS.

Disordered stretches follow at residues 20-104 (TANT…PSRG), 288-331 (NKMT…PGNQ), 387-453 (AQSH…DCGI), 480-538 (YLGQ…PLSM), 561-627 (MHLP…SMHS), and 648-693 (YGHG…RSGS). Positions 41 to 59 (ASLSPSGGSTATGLTAGPL) are enriched in low complexity. Positions 226–288 (LAARRKNATR…NARRRLKKEN (63 aa)) form a DNA-binding region, homeobox; TALE-type. Composition is skewed to basic and acidic residues over residues 288–298 (NKMTWEPKNKT) and 308–317 (DDEKEKDAGD). Composition is skewed to low complexity over residues 397 to 419 (HPQQ…QLQH) and 493 to 515 (QQLP…QQQQ). Basic residues predominate over residues 516–527 (QHHHHPHHHHPH). Residues 609 to 627 (SSGGSSSSSGSSHSSSMHS) show a composition bias toward low complexity. The span at 651-675 (GHSHGHGHGHGHGLGHGHGLGHGHG) shows a compositional bias: basic residues.

It belongs to the TALE/IRO homeobox family.

The protein resides in the nucleus. Functionally, controls proneural and vein forming genes. Positive transcriptional controller of ac-sc (achaete-scute). May act as an activator that interacts with the transcriptional complex assembled on the ac and sc promoters and participates in transcription initiation. The protein is Homeobox protein caupolican (caup) of Drosophila melanogaster (Fruit fly).